The primary structure comprises 378 residues: 3-dehydroquinate synthase (378 aa).

NAD(+)-binding positions include Gly-115–Asp-119, Thr-139–Ser-140, Lys-152, and Lys-161. Zn(2+)-binding residues include Glu-194, His-256, and His-275.

It belongs to the sugar phosphate cyclases superfamily. Dehydroquinate synthase family. Co(2+) is required as a cofactor. Requires Zn(2+) as cofactor. It depends on NAD(+) as a cofactor.

The protein resides in the cytoplasm. The catalysed reaction is 7-phospho-2-dehydro-3-deoxy-D-arabino-heptonate = 3-dehydroquinate + phosphate. Its pathway is metabolic intermediate biosynthesis; chorismate biosynthesis; chorismate from D-erythrose 4-phosphate and phosphoenolpyruvate: step 2/7. In terms of biological role, catalyzes the conversion of 3-deoxy-D-arabino-heptulosonate 7-phosphate (DAHP) to dehydroquinate (DHQ). This Brucella canis (strain ATCC 23365 / NCTC 10854 / RM-666) protein is 3-dehydroquinate synthase.